Reading from the N-terminus, the 660-residue chain is Bifunctional polymyxin resistance protein ArnA (660 aa).

The segment at methionine 1–leucine 304 is formyltransferase ArnAFT. Catalysis depends on histidine 104, which acts as the Proton donor; for formyltransferase activity. Residues arginine 114 and valine 136–aspartate 140 each bind (6R)-10-formyltetrahydrofolate. A dehydrogenase ArnADH region spans residues arginine 314–serine 660. Residues aspartate 347 and aspartate 368–isoleucine 369 each bind NAD(+). UDP-alpha-D-glucuronate is bound by residues alanine 393, tyrosine 398, and threonine 432–serine 433. Glutamate 434 acts as the Proton acceptor; for decarboxylase activity in catalysis. UDP-alpha-D-glucuronate-binding positions include arginine 460, asparagine 492, lysine 526–arginine 535, and tyrosine 613. Arginine 619 (proton donor; for decarboxylase activity) is an active-site residue.

It in the N-terminal section; belongs to the Fmt family. UDP-L-Ara4N formyltransferase subfamily. In the C-terminal section; belongs to the NAD(P)-dependent epimerase/dehydratase family. UDP-glucuronic acid decarboxylase subfamily. As to quaternary structure, homohexamer, formed by a dimer of trimers.

It catalyses the reaction UDP-alpha-D-glucuronate + NAD(+) = UDP-beta-L-threo-pentopyranos-4-ulose + CO2 + NADH. It carries out the reaction UDP-4-amino-4-deoxy-beta-L-arabinose + (6R)-10-formyltetrahydrofolate = UDP-4-deoxy-4-formamido-beta-L-arabinose + (6S)-5,6,7,8-tetrahydrofolate + H(+). Its pathway is nucleotide-sugar biosynthesis; UDP-4-deoxy-4-formamido-beta-L-arabinose biosynthesis; UDP-4-deoxy-4-formamido-beta-L-arabinose from UDP-alpha-D-glucuronate: step 1/3. It participates in nucleotide-sugar biosynthesis; UDP-4-deoxy-4-formamido-beta-L-arabinose biosynthesis; UDP-4-deoxy-4-formamido-beta-L-arabinose from UDP-alpha-D-glucuronate: step 3/3. The protein operates within bacterial outer membrane biogenesis; lipopolysaccharide biosynthesis. In terms of biological role, bifunctional enzyme that catalyzes the oxidative decarboxylation of UDP-glucuronic acid (UDP-GlcUA) to UDP-4-keto-arabinose (UDP-Ara4O) and the addition of a formyl group to UDP-4-amino-4-deoxy-L-arabinose (UDP-L-Ara4N) to form UDP-L-4-formamido-arabinose (UDP-L-Ara4FN). The modified arabinose is attached to lipid A and is required for resistance to polymyxin and cationic antimicrobial peptides. In Salmonella paratyphi C (strain RKS4594), this protein is Bifunctional polymyxin resistance protein ArnA.